The chain runs to 79 residues: Conotoxin Leo-O4 (79 aa).

Residues 1 to 22 form the signal peptide; the sequence is MKLTCMMLVAVLFLTAWTFVTA. A propeptide spanning residues 23-51 is cleaved from the precursor; sequence NVSRNGLENLFPEERHEMMNPNAAKLNNR. 3 cysteine pairs are disulfide-bonded: C53/C70, C60/C74, and C69/C78.

It belongs to the conotoxin O1 superfamily. Expressed by the venom duct.

Its subcellular location is the secreted. The protein is Conotoxin Leo-O4 of Conus leopardus (Leopard cone).